The chain runs to 410 residues: Histone-lysine N-methyltransferase SUV39H2 (410 aa).

In terms of domain architecture, Chromo spans 47–105 (YEVEYLCDYKVVKDMEYYLVKWKGWPDSTNTWEPLQNLKCPLLLQQFSNDKHNYLSQVK). The 59-residue stretch at 189–247 (FGCSCTDCFFQKCCPAEAGVLLAYNKNQQIKIPPGTPIYECNSRCQCGPDCPNRIVQKG) folds into the Pre-SET domain. Zn(2+) is bound by residues cysteine 191, cysteine 193, cysteine 196, cysteine 201, cysteine 202, cysteine 229, cysteine 233, cysteine 235, and cysteine 239. The 124-residue stretch at 250–373 (YSLCIFRTSN…AGEELTFDYQ (124 aa)) folds into the SET domain. Residues 261 to 263 (RGW) and 330 to 331 (NH) each bind S-adenosyl-L-methionine. Cysteine 333 contacts Zn(2+). S-adenosyl-L-methionine is bound at residue tyrosine 372. A phosphoserine mark is found at serine 381, serine 384, and serine 388. Residues 394-410 (VRTVCKCGAVTCRGYLN) enclose the Post-SET domain. Cysteine 398 is a Zn(2+) binding site. Lysine 399 serves as a coordination point for S-adenosyl-L-methionine. The Zn(2+) site is built by cysteine 400 and cysteine 405.

The protein belongs to the class V-like SAM-binding methyltransferase superfamily. Histone-lysine methyltransferase family. Suvar3-9 subfamily. In terms of assembly, interacts with SMAD5. The large PER complex involved in the histone methylation is composed of at least PER2, CBX3, TRIM28, SUV39H1 and/or SUV39H2; CBX3 mediates the formation of the complex. Post-translationally, ubiquitinated by the DCX(DCAF13) E3 ubiquitin ligase complex, leading to its degradation.

Its subcellular location is the nucleus. The protein resides in the chromosome. The protein localises to the centromere. It catalyses the reaction L-lysyl(9)-[histone H3] + 3 S-adenosyl-L-methionine = N(6),N(6),N(6)-trimethyl-L-lysyl(9)-[histone H3] + 3 S-adenosyl-L-homocysteine + 3 H(+). Histone methyltransferase that specifically trimethylates 'Lys-9' of histone H3 using monomethylated H3 'Lys-9' as substrate. H3 'Lys-9' trimethylation represents a specific tag for epigenetic transcriptional repression by recruiting HP1 (CBX1, CBX3 and/or CBX5) proteins to methylated histones. Mainly functions in heterochromatin regions, thereby playing a central role in the establishment of constitutive heterochromatin at pericentric and telomere regions. H3 'Lys-9' trimethylation is also required to direct DNA methylation at pericentric repeats. SUV39H1 is targeted to histone H3 via its interaction with RB1 and is involved in many processes, such as cell cycle regulation, transcriptional repression and regulation of telomere length. May participate in regulation of higher-order chromatin organization during spermatogenesis. Recruited by the large PER complex to the E-box elements of the circadian target genes such as PER2 itself or PER1, contributes to the conversion of local chromatin to a heterochromatin-like repressive state through H3 'Lys-9' trimethylation. In Homo sapiens (Human), this protein is Histone-lysine N-methyltransferase SUV39H2 (SUV39H2).